A 415-amino-acid chain; its full sequence is Gamma-glutamyl phosphate reductase (415 aa).

It belongs to the gamma-glutamyl phosphate reductase family.

The protein resides in the cytoplasm. The catalysed reaction is L-glutamate 5-semialdehyde + phosphate + NADP(+) = L-glutamyl 5-phosphate + NADPH + H(+). Its pathway is amino-acid biosynthesis; L-proline biosynthesis; L-glutamate 5-semialdehyde from L-glutamate: step 2/2. In terms of biological role, catalyzes the NADPH-dependent reduction of L-glutamate 5-phosphate into L-glutamate 5-semialdehyde and phosphate. The product spontaneously undergoes cyclization to form 1-pyrroline-5-carboxylate. The sequence is that of Gamma-glutamyl phosphate reductase from Xylella fastidiosa (strain 9a5c).